Reading from the N-terminus, the 691-residue chain is Elongation factor G (691 aa).

Positions 8–282 (ERVRNIGIAA…AVVDYLPAPV (275 aa)) constitute a tr-type G domain. Residues 17–24 (AHIDAGKT), 81–85 (DTPGH), and 135–138 (NKMD) each bind GTP.

It belongs to the TRAFAC class translation factor GTPase superfamily. Classic translation factor GTPase family. EF-G/EF-2 subfamily.

It is found in the cytoplasm. Catalyzes the GTP-dependent ribosomal translocation step during translation elongation. During this step, the ribosome changes from the pre-translocational (PRE) to the post-translocational (POST) state as the newly formed A-site-bound peptidyl-tRNA and P-site-bound deacylated tRNA move to the P and E sites, respectively. Catalyzes the coordinated movement of the two tRNA molecules, the mRNA and conformational changes in the ribosome. In Prochlorococcus marinus (strain MIT 9211), this protein is Elongation factor G.